The primary structure comprises 673 residues: UvrABC system protein B (673 aa).

In terms of domain architecture, Helicase ATP-binding spans 26 to 183; that stretch reads EGLEDGLAHQ…RRLAELQYTR (158 aa). Residue 39–46 coordinates ATP; the sequence is GVTGSGKT. A Beta-hairpin motif is present at residues 92-115; sequence YYDYYQPEAYVPSSDTFIEKDASV. Residues 431–597 form the Helicase C-terminal domain; sequence QVDDLLSEIR…GLNKKVVDIL (167 aa). The region spanning 633–668 is the UVR domain; sequence QQKIHELEGQMMQHAQNLEFEEAAQIRDQLHQLREL.

The protein belongs to the UvrB family. As to quaternary structure, forms a heterotetramer with UvrA during the search for lesions. Interacts with UvrC in an incision complex.

It is found in the cytoplasm. Its function is as follows. The UvrABC repair system catalyzes the recognition and processing of DNA lesions. A damage recognition complex composed of 2 UvrA and 2 UvrB subunits scans DNA for abnormalities. Upon binding of the UvrA(2)B(2) complex to a putative damaged site, the DNA wraps around one UvrB monomer. DNA wrap is dependent on ATP binding by UvrB and probably causes local melting of the DNA helix, facilitating insertion of UvrB beta-hairpin between the DNA strands. Then UvrB probes one DNA strand for the presence of a lesion. If a lesion is found the UvrA subunits dissociate and the UvrB-DNA preincision complex is formed. This complex is subsequently bound by UvrC and the second UvrB is released. If no lesion is found, the DNA wraps around the other UvrB subunit that will check the other stand for damage. The protein is UvrABC system protein B of Salmonella heidelberg (strain SL476).